We begin with the raw amino-acid sequence, 94 residues long: Large ribosomal subunit protein bL27 (94 aa).

A propeptide spanning residues 1–9 (MLKLNLQFF) is cleaved from the precursor.

This sequence belongs to the bacterial ribosomal protein bL27 family. The N-terminus is cleaved by ribosomal processing cysteine protease Prp.

This chain is Large ribosomal subunit protein bL27, found in Staphylococcus haemolyticus (strain JCSC1435).